The following is a 207-amino-acid chain: Outer-membrane lipoprotein LolB (207 aa).

Positions 1–21 are cleaved as a signal peptide; that stretch reads MPLPDFRLIRLLPLAALVLTA. A lipid anchor (N-palmitoyl cysteine) is attached at Cys22. Cys22 carries the S-diacylglycerol cysteine lipid modification.

Belongs to the LolB family. In terms of assembly, monomer.

It localises to the cell outer membrane. Its function is as follows. Plays a critical role in the incorporation of lipoproteins in the outer membrane after they are released by the LolA protein. In Escherichia coli O127:H6 (strain E2348/69 / EPEC), this protein is Outer-membrane lipoprotein LolB.